Here is a 368-residue protein sequence, read N- to C-terminus: 4-hydroxy-3-methylbut-2-en-1-yl diphosphate synthase (flavodoxin) (368 aa).

Cys271, Cys274, Cys306, and Glu313 together coordinate [4Fe-4S] cluster.

The protein belongs to the IspG family. The cofactor is [4Fe-4S] cluster.

The catalysed reaction is (2E)-4-hydroxy-3-methylbut-2-enyl diphosphate + oxidized [flavodoxin] + H2O + 2 H(+) = 2-C-methyl-D-erythritol 2,4-cyclic diphosphate + reduced [flavodoxin]. It participates in isoprenoid biosynthesis; isopentenyl diphosphate biosynthesis via DXP pathway; isopentenyl diphosphate from 1-deoxy-D-xylulose 5-phosphate: step 5/6. In terms of biological role, converts 2C-methyl-D-erythritol 2,4-cyclodiphosphate (ME-2,4cPP) into 1-hydroxy-2-methyl-2-(E)-butenyl 4-diphosphate. The protein is 4-hydroxy-3-methylbut-2-en-1-yl diphosphate synthase (flavodoxin) of Buchnera aphidicola subsp. Acyrthosiphon pisum (strain APS) (Acyrthosiphon pisum symbiotic bacterium).